A 57-amino-acid chain; its full sequence is Insulin (57 aa).

3 disulfides stabilise this stretch: C12/C43, C24/C56, and C42/C47.

The protein belongs to the insulin family. Heterodimer of a B chain and an A chain linked by two disulfide bonds.

It is found in the secreted. Insulin decreases blood glucose concentration. It increases cell permeability to monosaccharides, amino acids and fatty acids. It accelerates glycolysis, the pentose phosphate cycle, and glycogen synthesis in liver. In Lampetra fluviatilis (European river lamprey), this protein is Insulin (ins).